Consider the following 398-residue polypeptide: Potassium channel subfamily K member 4 (398 aa).

Residues 1 to 3 lie on the Cytoplasmic side of the membrane; sequence MRS. The helical transmembrane segment at 4–24 threads the bilayer; that stretch reads TTLLALLALVLLYLVSGALVF. Residues 25–88 are Extracellular-facing; that stretch reads QALEQPHEQQ…WTNSSNHSSA (64 aa). N81 and N84 each carry an N-linked (GlcNAc...) asparagine glycan. The segment at residues 89-103 is an intramembrane region (helical); the sequence is WNLGSAFFFSGTIIT. Positions 104, 105, 106, and 107 each coordinate K(+). A selectivity filter 1 region spans residues 104-109; sequence TIGYGN. An intramembrane segment occupies 104 to 110; the sequence is TIGYGNI. The Extracellular segment spans residues 111–118; that stretch reads VLHTDAGR. Residues 119-151 traverse the membrane as a helical segment; sequence LFCIFYALVGIPLFGMLLAGVGDRLGSSLRRGI. The Cytoplasmic segment spans residues 152–173; it reads GHIEAIFLKWHVPPGLVRSLSA. Residues 174–195 traverse the membrane as a helical segment; that stretch reads VLFLLIGCLLFVLTPTFVFSYM. Residues 196–200 are Extracellular-facing; it reads ESWSK. The helical intramembrane region spans 201–214; sequence LEAIYFVIVTLTTV. Positions 213, 214, 215, and 216 each coordinate K(+). Residues 213 to 218 form a selectivity filter 2 region; that stretch reads TVGFGD. The stretch at 215-220 is an intramembrane region; that stretch reads GFGDYV. The Extracellular segment spans residues 221-234; it reads PGDGTGQNSPAYQP. The helical transmembrane segment at 235–261 threads the bilayer; the sequence is LVWFWILFGLAYFASVLTTIGNWLRAV. Residues 262 to 398 are Cytoplasmic-facing; the sequence is SRRTRAEMGG…GRLRDKAVPV (137 aa). Residues 282–292 show a composition bias toward polar residues; sequence TVTARVTQRTG. Residues 282-398 are disordered; that stretch reads TVTARVTQRT…GRLRDKAVPV (117 aa). A compositionally biased stretch (basic residues) spans 370–389; that stretch reads PRGRRRPNPSKKPSRPRGPG.

Belongs to the two pore domain potassium channel (TC 1.A.1.8) family. In terms of assembly, homodimer; disulfide-linked. Forms heterodimers with other 2-pore domain K(+) channel subunits, such as KCNK2 and KCNK10. N-glycosylated. As to expression, expressed in brain, spinal cord and eye. Not detected in heart, skeletal muscle, liver, lungs, kidney and testis.

The protein localises to the cell membrane. It is found in the cell projection. Its subcellular location is the axon. The enzyme catalyses K(+)(in) = K(+)(out). It carries out the reaction Rb(+)(in) = Rb(+)(out). It catalyses the reaction Cs(+)(in) = Cs(+)(out). With respect to regulation, activated by arachidonic acid and other polyunsaturated fatty acids. Not affected by volatile general anesthetics such as chloroform, diethyl ether, halothane and isoflurane. Activated at intracellular and extracellular basic pHs. Its function is as follows. K(+) channel that conducts voltage-dependent outward rectifying currents upon membrane depolarization. Voltage sensing is coupled to K(+) electrochemical gradient in an 'ion flux gating' mode where outward but not inward ion flow opens the gate. Converts to voltage-independent 'leak' conductance mode upon stimulation by various stimuli including mechanical membrane stretch, basic pH, temperature and lipids. Homo- and heterodimerizes to form functional channels with distinct regulatory and gating properties. At trigeminal A-beta afferent nerves, the heterodimer of KCNK2/TREK-1 and KCNK4/TRAAK is mostly coexpressed at nodes of Ranvier where it conducts voltage-independent mechanosensitive and thermosensitive currents, allowing rapid action potential repolarization, high speed and high frequence saltatory conduction on myelinated nerves to ensure prompt sensory responses. Permeable to other monovalent cations such as Rb(+) and Cs(+). The polypeptide is Potassium channel subfamily K member 4 (Mus musculus (Mouse)).